We begin with the raw amino-acid sequence, 122 residues long: Small ribosomal subunit protein uS13 (122 aa).

The disordered stretch occupies residues 96–122 (PVRGQRTRTNARTRKGPKKTVGVRRAK).

The protein belongs to the universal ribosomal protein uS13 family. As to quaternary structure, part of the 30S ribosomal subunit. Forms a loose heterodimer with protein S19. Forms two bridges to the 50S subunit in the 70S ribosome.

Located at the top of the head of the 30S subunit, it contacts several helices of the 16S rRNA. In the 70S ribosome it contacts the 23S rRNA (bridge B1a) and protein L5 of the 50S subunit (bridge B1b), connecting the 2 subunits; these bridges are implicated in subunit movement. Contacts the tRNAs in the A and P-sites. The sequence is that of Small ribosomal subunit protein uS13 from Halothermothrix orenii (strain H 168 / OCM 544 / DSM 9562).